A 112-amino-acid chain; its full sequence is Ig kappa chain V-III region PC 7132 (112 aa).

Residues 1–23 are framework-1; it reads DIVLTQSPASLAVSLGQRATISC. Cysteines 23 and 92 form a disulfide. A complementarity-determining-1 region spans residues 24–38; it reads RASESVDNYGISFMN. Positions 39 to 53 are framework-2; it reads WFQQKPGQPPKLLIY. The interval 54–60 is complementarity-determining-2; the sequence is AASNQGS. The tract at residues 61–92 is framework-3; it reads GVPARFSGSGSGTDFSLNIHPMEEDDTAMYFC. A complementarity-determining-3 region spans residues 93–102; that stretch reads QQSKEVPPYT. Positions 103–112 are framework-4; sequence FGGGTKLEIK.

This is Ig kappa chain V-III region PC 7132 from Mus musculus (Mouse).